A 125-amino-acid chain; its full sequence is Small ribosomal subunit protein uS13 (125 aa).

The tract at residues 93-125 is disordered; sequence RAGLPVRGQRTRTNARTRRGARKTVAGKKKATR. Residues 101–125 show a composition bias toward basic residues; it reads QRTRTNARTRRGARKTVAGKKKATR.

The protein belongs to the universal ribosomal protein uS13 family. Part of the 30S ribosomal subunit. Forms a loose heterodimer with protein S19. Forms two bridges to the 50S subunit in the 70S ribosome.

Its function is as follows. Located at the top of the head of the 30S subunit, it contacts several helices of the 16S rRNA. In the 70S ribosome it contacts the 23S rRNA (bridge B1a) and protein L5 of the 50S subunit (bridge B1b), connecting the 2 subunits; these bridges are implicated in subunit movement. Contacts the tRNAs in the A and P-sites. The sequence is that of Small ribosomal subunit protein uS13 from Synechococcus elongatus (strain ATCC 33912 / PCC 7942 / FACHB-805) (Anacystis nidulans R2).